The following is a 130-amino-acid chain: Small ribosomal subunit protein uS11 (130 aa).

The protein belongs to the universal ribosomal protein uS11 family. As to quaternary structure, part of the 30S ribosomal subunit. Interacts with proteins S7 and S18. Binds to IF-3.

Its function is as follows. Located on the platform of the 30S subunit, it bridges several disparate RNA helices of the 16S rRNA. Forms part of the Shine-Dalgarno cleft in the 70S ribosome. In Alkalilimnicola ehrlichii (strain ATCC BAA-1101 / DSM 17681 / MLHE-1), this protein is Small ribosomal subunit protein uS11.